Here is a 365-residue protein sequence, read N- to C-terminus: Eukaryotic translation initiation factor 3 subunit H (365 aa).

An MPN domain is found at V11 to F160.

It belongs to the eIF-3 subunit H family. In terms of assembly, component of the eukaryotic translation initiation factor 3 (eIF-3) complex.

The protein localises to the cytoplasm. In terms of biological role, component of the eukaryotic translation initiation factor 3 (eIF-3) complex, which is involved in protein synthesis of a specialized repertoire of mRNAs and, together with other initiation factors, stimulates binding of mRNA and methionyl-tRNAi to the 40S ribosome. The eIF-3 complex specifically targets and initiates translation of a subset of mRNAs involved in cell proliferation. The polypeptide is Eukaryotic translation initiation factor 3 subunit H (Aspergillus niger (strain ATCC MYA-4892 / CBS 513.88 / FGSC A1513)).